The following is a 1135-amino-acid chain: Envelopment polyprotein (1135 aa).

The signal sequence occupies residues 1 to 35 (MRILKLLELVVKVSLFTIALSSVLLAFLIFRATDA). Over 36–314 (KVEIIRGDHP…KYSKSIYKQT (279 aa)) the chain is Lumenal. The Cell attachment site motif lies at 41 to 43 (RGD). 2 cysteine pairs are disulfide-bonded: C114–C145 and C122–C156. An N-linked (GlcNAc...) asparagine; by host glycan is attached at N116. Residues 177–195 (LDNKRHFSVGTKFFISESL) form a non-covalent dimerization region. A glycan (N-linked (GlcNAc...) asparagine; by host) is linked at N210. Cysteines 224 and 285 form a disulfide. The helical transmembrane segment at 315 to 366 (ACINFSWIRLILIALLIYFPIRWLVNKTTKPLFLWYDLIGLITYPILLLINC) threads the bilayer. The Cytoplasmic segment spans residues 367–484 (LWKYFPFKCS…VPGCPFLVTS (118 aa)). The tract at residues 437 to 484 (LSFSLLKFVTEILIGLIILSQMPMSMAQTTQCLSGCFYVPGCPFLVTS) is signal for signal peptide peptidase. The Lumenal portion of the chain corresponds to 485-1067 (KFEKCPERDQ…YFGSFFDTIR (583 aa)). 3 N-linked (GlcNAc...) asparagine; by host glycosylation sites follow: N588, N605, and N980. The chain crosses the membrane as a helical span at residues 1068–1088 (VILLIAFIFLVIYFCSILTTI). The Cytoplasmic portion of the chain corresponds to 1089–1135 (CKGYVKNESYKSRSKIEDDDDSEIKAPMLMKDTMTRRRPPMDFSHLV).

The protein belongs to the tospovirus envelope glycoprotein family. In terms of assembly, homodimer; disulfide-linked. Heterodimer with Glycoprotein C. Interacts with nucleoprotein. Heterodimer with Glycoprotein N. Interacts with nucleoprotein. Specific enzymatic cleavages in vivo yield mature proteins including Glycoprotein N and Glycoprotein C. In terms of processing, glycosylated with O-linked glycans. Glycosylation is essential for proper subcellular location. Post-translationally, cleaved at acidic pH.

Its subcellular location is the virion membrane. The protein resides in the host Golgi apparatus membrane. It is found in the host endoplasmic reticulum membrane. Its function is as follows. Forms the spikes present at the surface of the virion together with Glycoprotein C. They are able to attach the virion to a cell receptor and to promote fusion of membranes after endocytosis of the virion. Plays a role in virus binding and/or entry into the vector midgut. Functionally, forms the spikes present at the surface of the virion together with Glycoprotein N. They are able to attach the virion to a cell receptor and to promote fusion of membranes after endocytosis of the virion. Probable class II fusion protein. This Tomato spotted wilt virus (strain Regular2A) (TSWV) protein is Envelopment polyprotein (GP).